We begin with the raw amino-acid sequence, 619 residues long: 1-deoxy-D-xylulose-5-phosphate synthase (619 aa).

Thiamine diphosphate is bound by residues histidine 74 and 115 to 117 (GHS). Position 146 (aspartate 146) interacts with Mg(2+). Residues 147–148 (GA), asparagine 175, tyrosine 285, and glutamate 365 each bind thiamine diphosphate. Asparagine 175 lines the Mg(2+) pocket.

Belongs to the transketolase family. DXPS subfamily. As to quaternary structure, homodimer. Requires Mg(2+) as cofactor. Thiamine diphosphate is required as a cofactor.

The catalysed reaction is D-glyceraldehyde 3-phosphate + pyruvate + H(+) = 1-deoxy-D-xylulose 5-phosphate + CO2. The protein operates within metabolic intermediate biosynthesis; 1-deoxy-D-xylulose 5-phosphate biosynthesis; 1-deoxy-D-xylulose 5-phosphate from D-glyceraldehyde 3-phosphate and pyruvate: step 1/1. In terms of biological role, catalyzes the acyloin condensation reaction between C atoms 2 and 3 of pyruvate and glyceraldehyde 3-phosphate to yield 1-deoxy-D-xylulose-5-phosphate (DXP). This chain is 1-deoxy-D-xylulose-5-phosphate synthase, found in Clostridium perfringens (strain SM101 / Type A).